The sequence spans 249 residues: Type III pantothenate kinase (249 aa).

Residue 6 to 13 participates in ATP binding; the sequence is DCGNSFIK. Residues Y93 and 100 to 103 contribute to the substrate site; that span reads GLDR. D102 functions as the Proton acceptor in the catalytic mechanism. D122 is a K(+) binding site. T125 serves as a coordination point for ATP. Substrate is bound at residue T181.

Belongs to the type III pantothenate kinase family. Homodimer. The cofactor is NH4(+). K(+) serves as cofactor.

The protein resides in the cytoplasm. The enzyme catalyses (R)-pantothenate + ATP = (R)-4'-phosphopantothenate + ADP + H(+). Its pathway is cofactor biosynthesis; coenzyme A biosynthesis; CoA from (R)-pantothenate: step 1/5. Its function is as follows. Catalyzes the phosphorylation of pantothenate (Pan), the first step in CoA biosynthesis. This Pseudomonas syringae pv. syringae (strain B728a) protein is Type III pantothenate kinase.